The sequence spans 234 residues: Proteasome subunit alpha type-2 (234 aa).

The protein belongs to the peptidase T1A family. As to quaternary structure, the 26S proteasome consists of a 20S proteasome core and two 19S regulatory subunits. The 20S proteasome core is composed of 28 subunits that are arranged in four stacked rings, resulting in a barrel-shaped structure. The two end rings are each formed by seven alpha subunits, and the two central rings are each formed by seven beta subunits. The catalytic chamber with the active sites is on the inside of the barrel. Interacts with Rpn6.

It localises to the cytoplasm. Its subcellular location is the nucleus. Its function is as follows. The proteasome is a multicatalytic proteinase complex which is characterized by its ability to cleave peptides with Arg, Phe, Tyr, Leu, and Glu adjacent to the leaving group at neutral or slightly basic pH. The proteasome has an ATP-dependent proteolytic activity. The sequence is that of Proteasome subunit alpha type-2 (Prosalpha2) from Drosophila melanogaster (Fruit fly).